Here is a 418-residue protein sequence, read N- to C-terminus: uncharacterized protein (418 aa).

This is an uncharacterized protein from Ictalurid herpesvirus 1 (strain Auburn) (IcHV-1).